Here is a 175-residue protein sequence, read N- to C-terminus: Ribosome maturation factor RimM (175 aa).

Residues 95-175 enclose the PRC barrel domain; sequence SEDEFYWREL…RIEVDWDPGF (81 aa).

The protein belongs to the RimM family. As to quaternary structure, binds ribosomal protein uS19.

Its subcellular location is the cytoplasm. An accessory protein needed during the final step in the assembly of 30S ribosomal subunit, possibly for assembly of the head region. Essential for efficient processing of 16S rRNA. May be needed both before and after RbfA during the maturation of 16S rRNA. It has affinity for free ribosomal 30S subunits but not for 70S ribosomes. The polypeptide is Ribosome maturation factor RimM (Aliivibrio salmonicida (strain LFI1238) (Vibrio salmonicida (strain LFI1238))).